A 607-amino-acid polypeptide reads, in one-letter code: UvrABC system protein C (607 aa).

The GIY-YIG domain occupies 16–94 (ARPGVYRMFD…IKQWRPPYNI (79 aa)). The 36-residue stretch at 203–238 (QQLGNELNAEMEKAAMALNFEKAAELRDQIALLRRV) folds into the UVR domain.

The protein belongs to the UvrC family. In terms of assembly, interacts with UvrB in an incision complex.

It is found in the cytoplasm. Functionally, the UvrABC repair system catalyzes the recognition and processing of DNA lesions. UvrC both incises the 5' and 3' sides of the lesion. The N-terminal half is responsible for the 3' incision and the C-terminal half is responsible for the 5' incision. This chain is UvrABC system protein C, found in Pseudomonas putida (strain W619).